The chain runs to 144 residues: Cytochrome c3 (144 aa).

Positions methionine 1–alanine 24 are cleaved as a signal peptide. Residues histidine 51, histidine 54, cysteine 59, cysteine 62, histidine 63, histidine 64, cysteine 76, cysteine 81, histidine 82, histidine 100, cysteine 108, cysteine 111, histidine 112, cysteine 125, cysteine 128, and histidine 129 each coordinate heme c.

Belongs to the cytochrome c family. As to quaternary structure, homodimer. Heterotrimer of cytochrome c3 FDH2C and formate dehydrogenase FDH2 alpha and beta subunits that forms the FdhABC(3) complex. Binds 4 heme c groups per subunit.

The protein localises to the periplasm. Functionally, participates in sulfate respiration coupled with phosphorylation by transferring electrons from the enzyme dehydrogenase to ferredoxin. Gamma chain of the formate dehydrogenase (FDH) that catalyzes the reversible two-electron oxidation of formate to carbon dioxide. The gamma subunit of formate dehydrogenase forms a c-type heme. This chain is Cytochrome c3, found in Nitratidesulfovibrio vulgaris (strain ATCC 29579 / DSM 644 / CCUG 34227 / NCIMB 8303 / VKM B-1760 / Hildenborough) (Desulfovibrio vulgaris).